Here is a 454-residue protein sequence, read N- to C-terminus: Immediate-early protein ICP-46 homolog (454 aa).

Positions 330-357 form a coiled coil; that stretch reads EKDIETIEKYEKTIQELIVELHNLYLKR. Residues 428–454 form a disordered region; the sequence is SSPTASLSSLSPPSSNNNSPIRSPIRM.

It belongs to the IIV-6 393L family.

This Invertebrate iridescent virus 6 (IIV-6) protein is Immediate-early protein ICP-46 homolog.